The following is a 363-amino-acid chain: GTPase Obg (363 aa).

The Obg domain maps to 1 to 159 (MKFIDEAKIY…LELRLELRVL (159 aa)). An OBG-type G domain is found at 160–338 (ADVGLLGLPN…LIYAISEALE (179 aa)). GTP contacts are provided by residues 166-173 (GLPNAGKS), 191-195 (FTTLH), 213-216 (DVPG), 284-287 (NKLD), and 319-321 (AAI). 2 residues coordinate Mg(2+): serine 173 and threonine 193. Positions 342–363 (RPEIGDLDDNDEDSDEIIRDTE) are disordered. Acidic residues predominate over residues 346-356 (GDLDDNDEDSD).

It belongs to the TRAFAC class OBG-HflX-like GTPase superfamily. OBG GTPase family. In terms of assembly, monomer. Mg(2+) is required as a cofactor.

It is found in the cytoplasm. An essential GTPase which binds GTP, GDP and possibly (p)ppGpp with moderate affinity, with high nucleotide exchange rates and a fairly low GTP hydrolysis rate. Plays a role in control of the cell cycle, stress response, ribosome biogenesis and in those bacteria that undergo differentiation, in morphogenesis control. The sequence is that of GTPase Obg from Dechloromonas aromatica (strain RCB).